The primary structure comprises 348 residues: Beta-hexosaminidase (348 aa).

Residues Asp-64, Arg-72, Arg-138, and 168–169 (KH) each bind substrate. The Proton donor/acceptor role is filled by His-181. Catalysis depends on Asp-252, which acts as the Nucleophile.

This sequence belongs to the glycosyl hydrolase 3 family. NagZ subfamily.

The protein localises to the cytoplasm. It carries out the reaction Hydrolysis of terminal non-reducing N-acetyl-D-hexosamine residues in N-acetyl-beta-D-hexosaminides.. Its pathway is cell wall biogenesis; peptidoglycan recycling. Its function is as follows. Plays a role in peptidoglycan recycling by cleaving the terminal beta-1,4-linked N-acetylglucosamine (GlcNAc) from peptide-linked peptidoglycan fragments, giving rise to free GlcNAc, anhydro-N-acetylmuramic acid and anhydro-N-acetylmuramic acid-linked peptides. This is Beta-hexosaminidase from Nitrosomonas eutropha (strain DSM 101675 / C91 / Nm57).